The sequence spans 387 residues: MGPLFTTIPGAHSGPMRPLPKKHVEPMAVRQLLLGNATMIRHTCPMSVPLSRQVKEVAAQKPSEDIYKNWRRQQQQQQQQQQQQQQQQLDLLFHQRIQISLWPRKQKRRKTEQHSHSFVKKAFRFSASPGCGRPSSNKMLRSMGGGQRPTGLGSEFFRLLHDLHLLAFPTKCIWIHRRGEATARPRAPEHPAPPATAVRGRDAASQNLKRRPGSGTDGLRLQGAEPSRLLRTYAGGAVIPTGTPERAQPPPPQDLLGRRRWLSRNTWGPWPGTTQPPSPQLLRNDWGSCGFMVPEAARGKVFQDSQEGAHIRRETVSKSVCAEPWRHQRARDPAPTNFPLKCQKQRGASTSSGQHGGRVNLVFFIDSPTVIAVPDLQCPTKYSGILY.

Disordered regions lie at residues 1–21, 182–226, and 329–353; these read MGPL…PLPK, TARP…GAEP, and RARD…TSSG.

The protein belongs to the FAM157 family.

The polypeptide is Putative protein FAM157C (FAM157C) (Homo sapiens (Human)).